A 283-amino-acid chain; its full sequence is Putative cuticle collagen 79 (283 aa).

The segment at 59 to 283 is disordered; it reads FKQQSSPPSP…ARSISKVAIQ (225 aa). Triple-helical region stretches follow at residues 94–122, 139–201, and 204–269; these read GPPG…ENGG, GPRG…PGRK, and GEAG…DGAY. The segment covering 137–146 has biased composition (pro residues); it reads PPGPRGPPGP. The span at 226 to 240 shows a compositional bias: acidic residues; that stretch reads TDGDDGVDGQPGDEG. Over residues 253–265 the composition is skewed to low complexity; that stretch reads PQGEQGTEGQPGT.

This sequence belongs to the cuticular collagen family. In terms of assembly, collagen polypeptide chains are complexed within the cuticle by disulfide bonds and other types of covalent cross-links.

In terms of biological role, nematode cuticles are composed largely of collagen-like proteins. The cuticle functions both as an exoskeleton and as a barrier to protect the worm from its environment. This Caenorhabditis elegans protein is Putative cuticle collagen 79 (col-79).